Reading from the N-terminus, the 247-residue chain is Phosphoribosylaminoimidazole-succinocarboxamide synthase (247 aa).

Belongs to the SAICAR synthetase family.

It catalyses the reaction 5-amino-1-(5-phospho-D-ribosyl)imidazole-4-carboxylate + L-aspartate + ATP = (2S)-2-[5-amino-1-(5-phospho-beta-D-ribosyl)imidazole-4-carboxamido]succinate + ADP + phosphate + 2 H(+). It participates in purine metabolism; IMP biosynthesis via de novo pathway; 5-amino-1-(5-phospho-D-ribosyl)imidazole-4-carboxamide from 5-amino-1-(5-phospho-D-ribosyl)imidazole-4-carboxylate: step 1/2. The protein is Phosphoribosylaminoimidazole-succinocarboxamide synthase of Gloeobacter violaceus (strain ATCC 29082 / PCC 7421).